The chain runs to 284 residues: MTIVNLAAYHFVSLDAIEQWRPLVTARCNELGLRGTILLAPEGINLFIAGPREATDAFVDYLRHDPLFEGKFATLQFKESLSDSQPFRRMLVRLKREIITMKKPAIKPELGRAPSVDARTLKAWLDRGHDDDGRPVVMLDTRNAFEVDVGTFDDALDYRIDKFSQFPEVIDANRADLEGKTVVSFCTGGIRCEKAAIHMKEIGIDHVYQLEGGILKYFEEVGGAHYHGDCFVFDYRTALNPQLQPTESVTCFACRAVVTPQAQQSPDYVPGKSCPACAQAAAAA.

One can recognise a Rhodanese domain in the interval 132-226; that stretch reads DGRPVVMLDT…YFEEVGGAHY (95 aa). Cysteine 186 acts as the Cysteine persulfide intermediate in catalysis.

This sequence belongs to the TrhO family.

The enzyme catalyses uridine(34) in tRNA + AH2 + O2 = 5-hydroxyuridine(34) in tRNA + A + H2O. In terms of biological role, catalyzes oxygen-dependent 5-hydroxyuridine (ho5U) modification at position 34 in tRNAs. In Burkholderia vietnamiensis (strain G4 / LMG 22486) (Burkholderia cepacia (strain R1808)), this protein is tRNA uridine(34) hydroxylase.